The primary structure comprises 198 residues: MGSEAMLPVALLIGYLLGSIPFGLILTKLAGTQDLRSIGSGNIGATNVLRTGRKGLAAATLLGDALKGTAAVIIAGYLGGSNAAMLAGLGAFLGHLFPVWLKFRGGKGVAVYIGILIGLLWPYAIFFCLVWLATAFASRYSSLAALVASVLTPIVLWAFGHTALAALFALLTLLLIYMHRENIKRLRAGTESKIGAKK.

The next 5 helical transmembrane spans lie at methionine 6–leucine 26, leucine 56–leucine 78, alanine 83–leucine 101, isoleucine 113–alanine 133, and isoleucine 154–leucine 174.

Belongs to the PlsY family. In terms of assembly, probably interacts with PlsX.

The protein localises to the cell inner membrane. It carries out the reaction an acyl phosphate + sn-glycerol 3-phosphate = a 1-acyl-sn-glycero-3-phosphate + phosphate. The protein operates within lipid metabolism; phospholipid metabolism. In terms of biological role, catalyzes the transfer of an acyl group from acyl-phosphate (acyl-PO(4)) to glycerol-3-phosphate (G3P) to form lysophosphatidic acid (LPA). This enzyme utilizes acyl-phosphate as fatty acyl donor, but not acyl-CoA or acyl-ACP. The polypeptide is Glycerol-3-phosphate acyltransferase (Bradyrhizobium sp. (strain ORS 278)).